We begin with the raw amino-acid sequence, 199 residues long: Recombination protein RecR (199 aa).

Residues 57 to 72 form a C4-type zinc finger; sequence CQSCRTYTEETLCPIC. A Toprim domain is found at 81–176; that stretch reads STICVVETPA…MISRIAHGVP (96 aa).

Belongs to the RecR family.

Its function is as follows. May play a role in DNA repair. It seems to be involved in an RecBC-independent recombinational process of DNA repair. It may act with RecF and RecO. This Shewanella baltica (strain OS155 / ATCC BAA-1091) protein is Recombination protein RecR.